The following is a 317-amino-acid chain: Glycine--tRNA ligase alpha subunit (317 aa).

The protein belongs to the class-II aminoacyl-tRNA synthetase family. Tetramer of two alpha and two beta subunits.

Its subcellular location is the cytoplasm. The enzyme catalyses tRNA(Gly) + glycine + ATP = glycyl-tRNA(Gly) + AMP + diphosphate. The polypeptide is Glycine--tRNA ligase alpha subunit (Lactococcus lactis subsp. cremoris (strain SK11)).